Reading from the N-terminus, the 91-residue chain is Small ribosomal subunit protein uS19 (91 aa).

Belongs to the universal ribosomal protein uS19 family.

Functionally, protein S19 forms a complex with S13 that binds strongly to the 16S ribosomal RNA. The protein is Small ribosomal subunit protein uS19 of Amoebophilus asiaticus (strain 5a2).